Reading from the N-terminus, the 682-residue chain is Potassium-transporting ATPase ATP-binding subunit (682 aa).

4 helical membrane-spanning segments follow: residues 34-54 (PVMF…IAMA), 62-82 (ALFS…ANFA), 219-239 (IALT…TATL), and 254-274 (VLVA…LSAI). Aspartate 307 acts as the 4-aspartylphosphate intermediate in catalysis. Residues aspartate 344, glutamate 348, 377–384 (FTAQSRMS), and lysine 395 each bind ATP. Mg(2+) contacts are provided by aspartate 518 and aspartate 522. The next 3 helical transmembrane spans lie at 588–608 (FAII…LNIM), 616–636 (AILS…PLAL), and 662–682 (LLVP…CGLV).

Belongs to the cation transport ATPase (P-type) (TC 3.A.3) family. Type IA subfamily. The system is composed of three essential subunits: KdpA, KdpB and KdpC.

It is found in the cell inner membrane. The enzyme catalyses K(+)(out) + ATP + H2O = K(+)(in) + ADP + phosphate + H(+). Its function is as follows. Part of the high-affinity ATP-driven potassium transport (or Kdp) system, which catalyzes the hydrolysis of ATP coupled with the electrogenic transport of potassium into the cytoplasm. This subunit is responsible for energy coupling to the transport system and for the release of the potassium ions to the cytoplasm. The sequence is that of Potassium-transporting ATPase ATP-binding subunit from Escherichia coli O81 (strain ED1a).